Here is a 215-residue protein sequence, read N- to C-terminus: MSDNAQLSGLCDRFRGFYPVVIDVETAGFNAKTDALLEIAAITLKMDEQGWLMPDTTLHFHVEPFAGANLQPEALAFNGIDPSNPLRGAVSEYEALHAIFKMVRKGIKDSGCSRAIMVAHNATFDHSFMMAAAERASLKRNPFHPFVTFDTAALSGLALGQTVLSKACLAAGMEFDGEKAHSALYDTERTAVLFCEIVNRWKRLGGWPLPLPTDK.

The Exonuclease domain occupies 20–194; sequence VVIDVETAGF…YDTERTAVLF (175 aa). Mg(2+) contacts are provided by aspartate 23, glutamate 25, histidine 181, and aspartate 186. Residue histidine 181 is the Proton donor/acceptor of the active site.

Belongs to the RNase T family. As to quaternary structure, homodimer. The cofactor is Mg(2+).

Functionally, trims short 3' overhangs of a variety of RNA species, leaving a one or two nucleotide 3' overhang. Responsible for the end-turnover of tRNA: specifically removes the terminal AMP residue from uncharged tRNA (tRNA-C-C-A). Also appears to be involved in tRNA biosynthesis. This Salmonella choleraesuis (strain SC-B67) protein is Ribonuclease T.